A 2175-amino-acid polypeptide reads, in one-letter code: Non-reducing polyketide synthase PKS1 (2175 aa).

Residues 5–242 (LLFGDQTAEQ…VSIPIYGPYH (238 aa)) are N-terminal acylcarrier protein transacylase domain (SAT). The region spanning 369–801 (TDKIAIVGMA…GGNTALLIED (433 aa)) is the Ketosynthase family 3 (KS3) domain. Residues Cys541, His676, and His719 each act as for beta-ketoacyl synthase activity in the active site. The segment at 900–1212 (FCFTGQGSQY…ISTSICHLFT (313 aa)) is malonyl-CoA:ACP transacylase (MAT) domain. Catalysis depends on Ser988, which acts as the For acyl/malonyl transferase activity. Positions 1285 to 1604 (STSCQNVISE…RKVLNVFLPP (320 aa)) are product template (PT) domain. Residues 1289–1424 (QNVISEEFDG…CTIRYEDKAV (136 aa)) form an N-terminal hotdog fold region. Positions 1289 to 1599 (QNVISEEFDG…FQQIPRKVLN (311 aa)) constitute a PKS/mFAS DH domain. The Proton acceptor; for dehydratase activity role is filled by His1321. Residues 1452–1599 (AHKVQRGMAY…FQQIPRKVLN (148 aa)) are C-terminal hotdog fold. Catalysis depends on Asp1512, which acts as the Proton donor; for dehydratase activity. The segment at 1640 to 1664 (PVRKSAGPAKAAAAPSMPKPSKVAA) is disordered. Low complexity predominate over residues 1643–1664 (KSAGPAKAAAAPSMPKPSKVAA). In terms of domain architecture, Carrier 1 spans 1666–1743 (KPAGSMVDKV…EMKKYFSQFN (78 aa)). Ser1703 carries the O-(pantetheine 4'-phosphoryl)serine modification. The tract at residues 1766–1804 (ATPFDEMSTPASSAPSVPQSDAGKPSPDSPTGDSLSDDV) is disordered. A compositionally biased stretch (polar residues) spans 1774–1784 (TPASSAPSVPQ). Positions 1801-1878 (SDDVGDVSIA…DIENALGMRP (78 aa)) constitute a Carrier 2 domain. Ser1838 is subject to O-(pantetheine 4'-phosphoryl)serine. A disordered region spans residues 1879-1899 (KPKAVGPKLSKPSTKTDMNEV). The segment covering 1889–1899 (KPSTKTDMNEV) has biased composition (polar residues). A claisen cyclase domain region spans residues 1932 to 2158 (KVFFLPDGSG…GHHFSMMKDP (227 aa)). Residue Ser2002 is the For Claisen cyclase activity of the active site.

Pantetheine 4'-phosphate serves as cofactor.

It catalyses the reaction 6 malonyl-CoA + acetyl-CoA + 6 H(+) = naphtopyrone YWA1 + 6 CO2 + 7 CoA + H2O. The protein operates within pigment biosynthesis; melanin biosynthesis. In terms of biological role, non-reducing polyketide synthase; part of the gene cluster 29 that mediates the biosynthesis of mediates the biosynthesis of dihydroxynaphthalene (DHN)-melanin, a bluish-green pigment and a structural component of the conidial wall. The first step of the pathway is the production of the heptaketide naphtopyrone YWA1 by the polyketide synthase PKS1 though condensation of acetyl-CoA with malonyl-CoA. This is Non-reducing polyketide synthase PKS1 from Zymoseptoria tritici (strain CBS 115943 / IPO323) (Speckled leaf blotch fungus).